The chain runs to 285 residues: 1-deoxypentalenic acid 11-beta-hydroxylase (285 aa).

Arg117 serves as a coordination point for substrate. Fe cation is bound by residues His137 and Asp139. 2-oxoglutarate is bound by residues 137–139 (HQD) and Trp153. Residue Arg188 coordinates substrate. Fe cation is bound at residue His226. The 2-oxoglutarate site is built by Ser228 and Arg240.

This sequence belongs to the PhyH family. It depends on Fe cation as a cofactor. The cofactor is L-ascorbate.

It catalyses the reaction 1-deoxypentalenate + 2-oxoglutarate + O2 = 1-deoxy-11beta-hydroxypentalenate + succinate + CO2. It participates in antibiotic biosynthesis; neopentalenolactone biosynthesis. Catalyzes the conversion of 1-deoxypentalenic acid to 11-beta-hydroxy-1-deoxypentalenic acid in the biosynthesis of neopentalenolactone antibiotic. The protein is 1-deoxypentalenic acid 11-beta-hydroxylase (ptlH) of Streptomyces avermitilis (strain ATCC 31267 / DSM 46492 / JCM 5070 / NBRC 14893 / NCIMB 12804 / NRRL 8165 / MA-4680).